A 95-amino-acid chain; its full sequence is MEVTDVRLRRVNTDGRMKAIASITIDHEFVVHDIRVIDGNNGMFVAMPSKRTPDGEFRDIAHPISSTTREKIQAAVLTEYDRVGQEEESTIEAGA.

This sequence belongs to the SpoVG family.

Its function is as follows. Could be involved in septation. In Brevibacillus brevis (strain 47 / JCM 6285 / NBRC 100599), this protein is Putative septation protein SpoVG.